Here is a 301-residue protein sequence, read N- to C-terminus: Dihydroorotate dehydrogenase B (NAD(+)), catalytic subunit (301 aa).

FMN-binding positions include S21 and 45–46 (KS). Substrate contacts are provided by residues K45, 69–73 (NAVGL), and N125. An FMN-binding site is contributed by N125. C128 functions as the Nucleophile in the catalytic mechanism. 2 residues coordinate FMN: K163 and I187. Substrate is bound at residue 188-189 (NT). FMN-binding positions include G213, 239–240 (GG), and 261–262 (GT).

The protein belongs to the dihydroorotate dehydrogenase family. Type 1 subfamily. Heterotetramer of 2 PyrK and 2 PyrD type B subunits. FMN serves as cofactor.

It is found in the cytoplasm. The enzyme catalyses (S)-dihydroorotate + NAD(+) = orotate + NADH + H(+). The protein operates within pyrimidine metabolism; UMP biosynthesis via de novo pathway; orotate from (S)-dihydroorotate (NAD(+) route): step 1/1. Catalyzes the conversion of dihydroorotate to orotate with NAD(+) as electron acceptor. This Thermoplasma volcanium (strain ATCC 51530 / DSM 4299 / JCM 9571 / NBRC 15438 / GSS1) protein is Dihydroorotate dehydrogenase B (NAD(+)), catalytic subunit (pyrD).